A 156-amino-acid chain; its full sequence is Calglandulin (156 aa).

EF-hand domains are found at residues 8–43 (EQITEYKGIFEMFDEEGNGLVKTDDLESLMSLIGIN), 44–79 (PTKRDLANMAKDVDKDKKGTFNCEGFLVLMGIYHEK), 82–117 (NQDEELRAAFKVFDKEHKGYIEWDTLKYVLMNAGEP), and 118–153 (LNEHEAELMMKEADKDGDGTIDYEEFVAMMTGESFK). Ca(2+) contacts are provided by Asp131, Asp133, Asp135, Thr137, and Glu142.

The protein belongs to the calmodulin family. Calglandulin subfamily. Expressed by the venom gland.

Its subcellular location is the cytoplasm. Functionally, may be involved in the cellular control mechanism of the secretion of toxins from the gland into the venom. The sequence is that of Calglandulin from Tropidechis carinatus (Australian rough-scaled snake).